The sequence spans 203 residues: Small ribosomal subunit protein uS5 (203 aa).

Residues 49–112 (FEERVVKIKR…KNANNNLIKV (64 aa)) form the S5 DRBM domain.

The protein belongs to the universal ribosomal protein uS5 family. As to quaternary structure, part of the 30S ribosomal subunit. Contacts proteins S4 and S8.

Functionally, with S4 and S12 plays an important role in translational accuracy. In terms of biological role, located at the back of the 30S subunit body where it stabilizes the conformation of the head with respect to the body. The polypeptide is Small ribosomal subunit protein uS5 (Ureaplasma parvum serovar 3 (strain ATCC 700970)).